The following is a 192-amino-acid chain: Peptidyl-tRNA hydrolase (192 aa).

Y17 contributes to the tRNA binding site. H22 acts as the Proton acceptor in catalysis. TRNA contacts are provided by F68, N70, and N116.

This sequence belongs to the PTH family. Monomer.

The protein localises to the cytoplasm. It catalyses the reaction an N-acyl-L-alpha-aminoacyl-tRNA + H2O = an N-acyl-L-amino acid + a tRNA + H(+). Hydrolyzes ribosome-free peptidyl-tRNAs (with 1 or more amino acids incorporated), which drop off the ribosome during protein synthesis, or as a result of ribosome stalling. Functionally, catalyzes the release of premature peptidyl moieties from peptidyl-tRNA molecules trapped in stalled 50S ribosomal subunits, and thus maintains levels of free tRNAs and 50S ribosomes. This Xylella fastidiosa (strain M12) protein is Peptidyl-tRNA hydrolase.